Here is a 159-residue protein sequence, read N- to C-terminus: 2-C-methyl-D-erythritol 2,4-cyclodiphosphate synthase (159 aa).

D10 and H12 together coordinate a divalent metal cation. Residues D10–H12 and H36–S37 each bind 4-CDP-2-C-methyl-D-erythritol 2-phosphate. H44 provides a ligand contact to a divalent metal cation. 4-CDP-2-C-methyl-D-erythritol 2-phosphate is bound by residues D58–G60, T134–E137, F141, and R144.

The protein belongs to the IspF family. In terms of assembly, homotrimer. A divalent metal cation serves as cofactor.

It catalyses the reaction 4-CDP-2-C-methyl-D-erythritol 2-phosphate = 2-C-methyl-D-erythritol 2,4-cyclic diphosphate + CMP. Its pathway is isoprenoid biosynthesis; isopentenyl diphosphate biosynthesis via DXP pathway; isopentenyl diphosphate from 1-deoxy-D-xylulose 5-phosphate: step 4/6. Involved in the biosynthesis of isopentenyl diphosphate (IPP) and dimethylallyl diphosphate (DMAPP), two major building blocks of isoprenoid compounds. Catalyzes the conversion of 4-diphosphocytidyl-2-C-methyl-D-erythritol 2-phosphate (CDP-ME2P) to 2-C-methyl-D-erythritol 2,4-cyclodiphosphate (ME-CPP) with a corresponding release of cytidine 5-monophosphate (CMP). The sequence is that of 2-C-methyl-D-erythritol 2,4-cyclodiphosphate synthase from Cereibacter sphaeroides (strain ATCC 17029 / ATH 2.4.9) (Rhodobacter sphaeroides).